The sequence spans 308 residues: Ribosomal RNA small subunit methyltransferase H (308 aa).

S-adenosyl-L-methionine is bound by residues 33–35 (GGH), D52, F78, D99, and Q106. Residues 289-308 (EEIETNSRSRSAKLRVAEKL) form a disordered region.

Belongs to the methyltransferase superfamily. RsmH family.

Its subcellular location is the cytoplasm. The enzyme catalyses cytidine(1402) in 16S rRNA + S-adenosyl-L-methionine = N(4)-methylcytidine(1402) in 16S rRNA + S-adenosyl-L-homocysteine + H(+). In terms of biological role, specifically methylates the N4 position of cytidine in position 1402 (C1402) of 16S rRNA. This chain is Ribosomal RNA small subunit methyltransferase H, found in Thermoanaerobacter sp. (strain X514).